The chain runs to 414 residues: Esterase FrsA (414 aa).

The protein belongs to the FrsA family.

The enzyme catalyses a carboxylic ester + H2O = an alcohol + a carboxylate + H(+). In terms of biological role, catalyzes the hydrolysis of esters. The sequence is that of Esterase FrsA from Klebsiella pneumoniae (strain 342).